The following is a 1194-amino-acid chain: ATP-dependent RNA helicase DHX30 (1194 aa).

Residues 1-10 are compositionally biased toward basic and acidic residues; it reads MFSLDSFRKD. Residues 1-27 are disordered; sequence MFSLDSFRKDRAQHRQRQCKLPPPRLP. A phosphoserine mark is found at Ser6 and Arg15. The region spanning 53–121 is the DRBM domain; the sequence is PKNLLNSVIG…QAAAAACQLF (69 aa). Residues 150 to 199 are disordered; that stretch reads ADSWWRPEPTMPPTSWRQLNPESIRPGGPGGLSRSLGREEEEDEEEELEE. Residues 188-199 are compositionally biased toward acidic residues; the sequence is EEEEDEEEELEE. Phosphoserine is present on residues Ser226 and Ser380. Positions 444–612 constitute a Helicase ATP-binding domain; that stretch reads LNAIEQHPVV…FGGCPVIKVP (169 aa). 457 to 464 contacts ATP; that stretch reads GDTGCGKT. Residues 559–562 carry the DEAH box motif; that stretch reads DEVH. Residues 654–827 form the Helicase C-terminal domain; sequence LVTDLVLHID…NLVLQAKIHM (174 aa).

The protein belongs to the DEAD box helicase family. DEAH subfamily. In terms of assembly, identified in a complex with TFAM and SSBP1. Interacts with AGO1 and AGO2. Interacts (via N-terminus) with ZC3HAV1 (via N-terminal domain) in an RNA-independent manner. Found in a complex with GRSF1, DDX28, FASTKD2 and FASTKD5. In terms of processing, phosphorylated on Ser-15.

It is found in the cytoplasm. The protein localises to the mitochondrion. Its subcellular location is the mitochondrion matrix. The protein resides in the mitochondrion nucleoid. It carries out the reaction ATP + H2O = ADP + phosphate + H(+). In terms of biological role, RNA-dependent helicase. Plays an important role in the assembly of the mitochondrial large ribosomal subunit. Required for optimal function of the zinc-finger antiviral protein ZC3HAV1. Associates with mitochondrial DNA. Involved in nervous system development and differentiation through its involvement in the up-regulation of a number of genes which are required for neurogenesis, including GSC, NCAM1, neurogenin, and NEUROD. The sequence is that of ATP-dependent RNA helicase DHX30 (DHX30) from Homo sapiens (Human).